An 85-amino-acid polypeptide reads, in one-letter code: UPF0386 protein TM1040_0419 (85 aa).

A disordered region spans residues 62–85; it reads SKSSRPYQISEKGRRSVRAQLDNR.

This sequence belongs to the UPF0386 family.

The protein is UPF0386 protein TM1040_0419 of Ruegeria sp. (strain TM1040) (Silicibacter sp.).